A 60-amino-acid polypeptide reads, in one-letter code: Small, acid-soluble spore protein H 1 (60 aa).

A disordered region spans residues 39–60 (IHPLDNPNQKQSVPVASLEEHS).

It belongs to the SspH family.

It localises to the spore core. The protein is Small, acid-soluble spore protein H 1 of Geobacillus kaustophilus (strain HTA426).